The sequence spans 353 residues: Probable protein phosphatase 2C 48 (353 aa).

The PPM-type phosphatase domain occupies 54–348; that stretch reads FAAVCSRRGE…DDCSAICLFF (295 aa). The Mn(2+) site is built by D90, G91, D293, and D339.

Belongs to the PP2C family. The cofactor is Mg(2+). Requires Mn(2+) as cofactor.

The catalysed reaction is O-phospho-L-seryl-[protein] + H2O = L-seryl-[protein] + phosphate. It catalyses the reaction O-phospho-L-threonyl-[protein] + H2O = L-threonyl-[protein] + phosphate. This is Probable protein phosphatase 2C 48 from Oryza sativa subsp. japonica (Rice).